The chain runs to 685 residues: Dammaradiene synthase (685 aa).

PFTB repeat units lie at residues 82–123 (MDKM…RLLN) and 265–308 (IREA…DPVV). Aspartate 400 functions as the Proton donor in the catalytic mechanism. PFTB repeat units follow at residues 424-465 (ITRC…KAMV) and 621-672 (IGHG…ARYR).

The protein belongs to the terpene cyclase/mutase family.

The catalysed reaction is squalene = dammara-20,24-diene. Its function is as follows. Squalene cyclase producing the tetracyclic triterpene dammaradiene. In Dryopteris crassirhizoma (Thick stemmed wood fern), this protein is Dammaradiene synthase (DCD).